The primary structure comprises 370 residues: Aminomethyltransferase (370 aa).

It belongs to the GcvT family. As to quaternary structure, the glycine cleavage system is composed of four proteins: P, T, L and H.

It catalyses the reaction N(6)-[(R)-S(8)-aminomethyldihydrolipoyl]-L-lysyl-[protein] + (6S)-5,6,7,8-tetrahydrofolate = N(6)-[(R)-dihydrolipoyl]-L-lysyl-[protein] + (6R)-5,10-methylene-5,6,7,8-tetrahydrofolate + NH4(+). Functionally, the glycine cleavage system catalyzes the degradation of glycine. The polypeptide is Aminomethyltransferase (Prochlorococcus marinus (strain MIT 9301)).